Here is a 182-residue protein sequence, read N- to C-terminus: Putative pre-16S rRNA nuclease (182 aa).

It belongs to the YqgF nuclease family.

It is found in the cytoplasm. Functionally, could be a nuclease involved in processing of the 5'-end of pre-16S rRNA. The chain is Putative pre-16S rRNA nuclease from Corynebacterium glutamicum (strain ATCC 13032 / DSM 20300 / JCM 1318 / BCRC 11384 / CCUG 27702 / LMG 3730 / NBRC 12168 / NCIMB 10025 / NRRL B-2784 / 534).